A 512-amino-acid polypeptide reads, in one-letter code: MTITLHPGSVPLADLAKIYWHGEPAVLDRSFDAGIERAAARIAAIAAGNEPVYGVNTGFGKLASIKIDAADTATLQRNLILSHCCGVGAPLAENIVRLILSLKLISLGRGASGVRLDLVRLIEAMLEKGVIPLIPEKGSVGASGDLAPLAHMAAVMMGEAEAFYQGEKLPGRIALERAGLTPVILAAKEGLALINGTQASTALALAGLFRAHRAAQAALITGAMSTDAAMGSSAPFTADIHTLRGHKGQIDTAASLRALLEGSVIRQSHLDGDERVQDPYCIRCQPQVDGACLDLLRMTARTLEIEANAVTDNPLVLSDDSVVSGGNFHAEPVAFAADQIAIAVCEIGAIAQRRIALLVDPTLSYGLPAFLAKKPGLNSGLMIAEVTSAALMSENKQMAHPASVDSTPTSANQEDHVSMACHGARRLLQMTENLFAIIGIEALTAAQGVEFRAPLTTSPELQKAMETLRAVVPTLEEDRFMAPDLAAASALVADGSLVGSVSSGILPGLEGF.

The segment at residues 142 to 144 (ASG) is a cross-link (5-imidazolinone (Ala-Gly)). 2,3-didehydroalanine (Ser) is present on serine 143.

Belongs to the PAL/histidase family. Contains an active site 4-methylidene-imidazol-5-one (MIO), which is formed autocatalytically by cyclization and dehydration of residues Ala-Ser-Gly.

It is found in the cytoplasm. It catalyses the reaction L-histidine = trans-urocanate + NH4(+). It participates in amino-acid degradation; L-histidine degradation into L-glutamate; N-formimidoyl-L-glutamate from L-histidine: step 1/3. The sequence is that of Histidine ammonia-lyase from Allorhizobium ampelinum (strain ATCC BAA-846 / DSM 112012 / S4) (Agrobacterium vitis (strain S4)).